A 264-amino-acid chain; its full sequence is MQKYAQILDLVRERNPLVHQITNYVTVNDCANMTICFGASPVMSHAPEDVVDMIKIASALVLNIGTLDEKQIEGMIAAANEAKKCGIPIVLDPVGAGATLYRTQTAERFMNEFPLAVIKGNAGEIGTLAGVSATVRGVDSGNISGDPKEIAHSLAKEYGCTVVISGAEDIISDGKRIAGVLNGVPIMGKISGTGCMASAVCGACAAVSDSMDGCITAMAALGIAGEEAAKTAKGPGSFKPAFFDAVTSLTNEQFIKSARISEYQ.

Residue Met-43 participates in substrate binding. Positions 119 and 165 each coordinate ATP. Gly-192 is a binding site for substrate.

Belongs to the Thz kinase family. Mg(2+) is required as a cofactor.

The catalysed reaction is 5-(2-hydroxyethyl)-4-methylthiazole + ATP = 4-methyl-5-(2-phosphooxyethyl)-thiazole + ADP + H(+). It functions in the pathway cofactor biosynthesis; thiamine diphosphate biosynthesis; 4-methyl-5-(2-phosphoethyl)-thiazole from 5-(2-hydroxyethyl)-4-methylthiazole: step 1/1. In terms of biological role, catalyzes the phosphorylation of the hydroxyl group of 4-methyl-5-beta-hydroxyethylthiazole (THZ). The protein is Hydroxyethylthiazole kinase of Methanocorpusculum labreanum (strain ATCC 43576 / DSM 4855 / Z).